The sequence spans 124 residues: ATP synthase epsilon chain (124 aa).

The protein belongs to the ATPase epsilon chain family. As to quaternary structure, F-type ATPases have 2 components, CF(1) - the catalytic core - and CF(0) - the membrane proton channel. CF(1) has five subunits: alpha(3), beta(3), gamma(1), delta(1), epsilon(1). CF(0) has three main subunits: a, b and c.

It localises to the cell membrane. In terms of biological role, produces ATP from ADP in the presence of a proton gradient across the membrane. This chain is ATP synthase epsilon chain, found in Streptomyces avermitilis (strain ATCC 31267 / DSM 46492 / JCM 5070 / NBRC 14893 / NCIMB 12804 / NRRL 8165 / MA-4680).